The following is a 218-amino-acid chain: Small ribosomal subunit protein uS3c (218 aa).

A KH type-2 domain is found at 47 to 118; it reads VQKNIRISSG…KLNIAITRIS (72 aa).

The protein belongs to the universal ribosomal protein uS3 family. As to quaternary structure, part of the 30S ribosomal subunit.

The protein localises to the plastid. It localises to the chloroplast. This Barbarea verna (Land cress) protein is Small ribosomal subunit protein uS3c (rps3).